The primary structure comprises 419 residues: Histone acetyltransferase type B subunit 2 (419 aa).

5 WD repeats span residues 131–171 (PHDG…VEAL), 177–217 (YHTE…KNIK), 225–265 (AHTD…IIHN), 267–307 (NTKK…NPLY), and 311–351 (GHED…AEQT). The tract at residues 353 to 357 (DEIED) is interaction with the histone H4 N-terminus. One copy of the WD 6 repeat lies at 368–408 (GHKTSINDIAVNPNINWLVASAEEDNIVQIWKCSSNIPRIG).

Belongs to the WD repeat RBAP46/RBAP48/MSI1 family. Component of the HAT-B complex composed of at least HAT1 and HAT2. The HAT-B complex binds to histone H4 tail.

It is found in the cytoplasm. The protein resides in the nucleus. In terms of biological role, regulatory subunit of the histone acetylase B (HAT-B) complex. The complex acetylates Lys-12 of histone H4 which is required for telomeric silencing. This chain is Histone acetyltransferase type B subunit 2 (HAT2), found in Candida glabrata (strain ATCC 2001 / BCRC 20586 / JCM 3761 / NBRC 0622 / NRRL Y-65 / CBS 138) (Yeast).